A 436-amino-acid chain; its full sequence is Trigger factor (436 aa).

The region spanning 161–246 (DDQLNIDFVG…VNSVAEPKLP (86 aa)) is the PPIase FKBP-type domain.

It belongs to the FKBP-type PPIase family. Tig subfamily.

The protein localises to the cytoplasm. The catalysed reaction is [protein]-peptidylproline (omega=180) = [protein]-peptidylproline (omega=0). In terms of biological role, involved in protein export. Acts as a chaperone by maintaining the newly synthesized protein in an open conformation. Functions as a peptidyl-prolyl cis-trans isomerase. In Pseudomonas paraeruginosa (strain DSM 24068 / PA7) (Pseudomonas aeruginosa (strain PA7)), this protein is Trigger factor.